The primary structure comprises 120 residues: Putative non-specific lipid-transfer protein 14 (120 aa).

Residues M1–A22 form the signal peptide. Disulfide bonds link C30–C80, C40–C57, C58–C102, and C78–C116.

This sequence belongs to the plant LTP family.

Its function is as follows. Plant non-specific lipid-transfer proteins transfer phospholipids as well as galactolipids across membranes. May play a role in wax or cutin deposition in the cell walls of expanding epidermal cells and certain secretory tissues. The protein is Putative non-specific lipid-transfer protein 14 (LTP14) of Arabidopsis thaliana (Mouse-ear cress).